The chain runs to 218 residues: Small ribosomal subunit protein uS3c (218 aa).

The KH type-2 domain occupies Val-47–Ser-118.

This sequence belongs to the universal ribosomal protein uS3 family. Part of the 30S ribosomal subunit.

Its subcellular location is the plastid. The protein resides in the chloroplast. The protein is Small ribosomal subunit protein uS3c (rps3) of Crucihimalaya wallichii (Rock-cress).